A 1026-amino-acid chain; its full sequence is Multidrug resistance protein MdtC (1026 aa).

Helical transmembrane passes span 15 to 35 (ILIA…LPVA), 333 to 353 (EVEE…FLFL), 360 to 380 (LIPA…MYLC), 387 to 407 (LSLM…IVVL), 431 to 451 (VGFT…PLLL), 463 to 483 (FAVT…TLTP), 528 to 548 (LVGV…IAIP), 853 to 873 (LILI…LYES), 897 to 917 (LFNA…IGIV), 953 to 973 (PIMM…LSGG), and 984 to 1004 (ITIV…TPVV).

The protein belongs to the resistance-nodulation-cell division (RND) (TC 2.A.6) family. MdtC subfamily. Part of a tripartite efflux system composed of MdtA, MdtB and MdtC. MdtC forms a heteromultimer with MdtB.

The protein localises to the cell inner membrane. The sequence is that of Multidrug resistance protein MdtC from Salmonella arizonae (strain ATCC BAA-731 / CDC346-86 / RSK2980).